We begin with the raw amino-acid sequence, 143 residues long: Large ribosomal subunit protein uL11 (143 aa).

Belongs to the universal ribosomal protein uL11 family. As to quaternary structure, part of the ribosomal stalk of the 50S ribosomal subunit. Interacts with L10 and the large rRNA to form the base of the stalk. L10 forms an elongated spine to which L12 dimers bind in a sequential fashion forming a multimeric L10(L12)X complex. Post-translationally, one or more lysine residues are methylated.

Functionally, forms part of the ribosomal stalk which helps the ribosome interact with GTP-bound translation factors. This Novosphingobium aromaticivorans (strain ATCC 700278 / DSM 12444 / CCUG 56034 / CIP 105152 / NBRC 16084 / F199) protein is Large ribosomal subunit protein uL11.